A 366-amino-acid polypeptide reads, in one-letter code: Cyanide hydratase (366 aa).

Positions 6-285 (YKAAAVTSEP…DGLMFVDIDL (280 aa)) constitute a CN hydrolase domain. Glutamate 46 acts as the Proton acceptor in catalysis. Lysine 128 is an active-site residue. The Nucleophile role is filled by cysteine 163.

This sequence belongs to the carbon-nitrogen hydrolase superfamily. Nitrilase family. In terms of assembly, oligomer of dimers, forming left-handed helical fibers.

The catalysed reaction is formamide = hydrogen cyanide + H2O. Its function is as follows. Catalyzes the hydration of cyanide to formamide. Degradation of cyanide may be important for plant pathogenic fungi in infection of cyanogenic plants. Can also transform some nitriles like 2-cyanopyridine and fumaronitrile. The sequence is that of Cyanide hydratase from Pyrenophora teres f. teres (strain 0-1) (Barley net blotch fungus).